The sequence spans 162 residues: NAD(P)H-quinone oxidoreductase subunit N (162 aa).

It belongs to the complex I NdhN subunit family. NDH-1 can be composed of about 15 different subunits; different subcomplexes with different compositions have been identified which probably have different functions.

Its subcellular location is the cellular thylakoid membrane. It catalyses the reaction a plastoquinone + NADH + (n+1) H(+)(in) = a plastoquinol + NAD(+) + n H(+)(out). The enzyme catalyses a plastoquinone + NADPH + (n+1) H(+)(in) = a plastoquinol + NADP(+) + n H(+)(out). NDH-1 shuttles electrons from an unknown electron donor, via FMN and iron-sulfur (Fe-S) centers, to quinones in the respiratory and/or the photosynthetic chain. The immediate electron acceptor for the enzyme in this species is believed to be plastoquinone. Couples the redox reaction to proton translocation, and thus conserves the redox energy in a proton gradient. Cyanobacterial NDH-1 also plays a role in inorganic carbon-concentration. This is NAD(P)H-quinone oxidoreductase subunit N from Trichormus variabilis (strain ATCC 29413 / PCC 7937) (Anabaena variabilis).